The primary structure comprises 50 residues: Large ribosomal subunit protein bL32c (50 aa).

It belongs to the bacterial ribosomal protein bL32 family.

It localises to the plastid. The sequence is that of Large ribosomal subunit protein bL32c (rpl32) from Euglena longa (Euglenophycean alga).